The chain runs to 133 residues: Holo-[acyl-carrier-protein] synthase (133 aa).

2 residues coordinate Mg(2+): Asp8 and Glu57.

It belongs to the P-Pant transferase superfamily. AcpS family. The cofactor is Mg(2+).

It is found in the cytoplasm. It catalyses the reaction apo-[ACP] + CoA = holo-[ACP] + adenosine 3',5'-bisphosphate + H(+). In terms of biological role, transfers the 4'-phosphopantetheine moiety from coenzyme A to a Ser of acyl-carrier-protein. In Caulobacter vibrioides (strain ATCC 19089 / CIP 103742 / CB 15) (Caulobacter crescentus), this protein is Holo-[acyl-carrier-protein] synthase.